Consider the following 1337-residue polypeptide: Nucleoporin POM152 (1337 aa).

Residues 1 to 48 (MEHRYNVFNDTPRGNHWMGSSVSGSPRPSYSSRPNVNTTRRFQYSDDE) are disordered. The Cytoplasmic segment spans residues 1 to 110 (MEHRYNVFND…TDVLEISKQR (110 aa)). The segment at 1–175 (MEHRYNVFND…SFNIPRLTFK (175 aa)) is pore side. The segment covering 19 to 37 (GSSVSGSPRPSYSSRPNVN) has biased composition (low complexity). S45 and S60 each carry phosphoserine. The chain crosses the membrane as a helical span at residues 111-131 (TFAVILFLIIQCYKIYDLVIL). Over 132–148 (KSGLPLSGLLFKNYRFN) the chain is Perinuclear space. A helical transmembrane segment spans residues 149 to 169 (FISKYFIIDSFFLYVLPSFNI). Over 170–172 (PRL) the chain is Cytoplasmic. Residues 173 to 193 (TFKPWVVYLQILAMLLLNIFI) form a helical membrane-spanning segment. Residues 194–1337 (SSDHEFVLIS…FAKNDLFFNN (1144 aa)) lie on the Perinuclear space side of the membrane. Positions 196–1337 (DHEFVLISLI…FAKNDLFFNN (1142 aa)) are cisternal side. A glycan (N-linked (GlcNAc...) asparagine) is linked at N280. Tandem repeats lie at residues 390–413 (DRCI…KLAY), 626–650 (DQCV…YYNT), 732–755 (KLCL…TLTY), 836–859 (KIKH…TVKF), 943–966 (EVCQ…ILEY), 1058–1077 (FLEP…SITF), 1157–1178 (EYCV…MIKY), and 1253–1276 (DIRE…SLTY). Residues 390 to 1276 (DRCIGDSDNV…EGTPPFSLTY (887 aa)) form an 8 X 24 AA approximate repeats region.

In terms of assembly, component of the nuclear pore complex (NPC). NPC constitutes the exclusive means of nucleocytoplasmic transport. NPCs allow the passive diffusion of ions and small molecules and the active, nuclear transport receptor-mediated bidirectional transport of macromolecules such as proteins, RNAs, ribonucleoparticles (RNPs), and ribosomal subunits across the nuclear envelope. Due to its 8-fold rotational symmetry, all subunits are present with 8 copies or multiples thereof. Interacts with NUP188. The N-terminus is blocked. Post-translationally, phosphorylated by CDC28.

Its subcellular location is the nucleus. It localises to the nuclear pore complex. The protein resides in the nucleus membrane. Functions as a component of the nuclear pore complex (NPC). NPC components, collectively referred to as nucleoporins (NUPs), can play the role of both NPC structural components and of docking or interaction partners for transiently associated nuclear transport factors. POM152 is important for the de novo assembly of NPCs. This is Nucleoporin POM152 (POM152) from Saccharomyces cerevisiae (strain ATCC 204508 / S288c) (Baker's yeast).